The sequence spans 220 residues: Casparian strip membrane protein 4 (220 aa).

The interval 1–39 (MDSRREVEESSTAPILESKRTRSNGKGKSIDGDHSPPHA) is disordered. Residues 1–60 (MDSRREVEESSTAPILESKRTRSNGKGKSIDGDHSPPHAATVVTTKATPLQKGGMKKGIA) are Cytoplasmic-facing. Residues 61 to 81 (ILDFILRLGAIGAALGAAVIM) form a helical membrane-spanning segment. Residues 82–108 (GTNEQILPFFTQFLQFHAQWDDFPMFK) lie on the Extracellular side of the membrane. A helical transmembrane segment spans residues 109 to 129 (FFVVANGAAAGFLILSLPFSI). Over 130–141 (VCIVRPLAAGPR) the chain is Cytoplasmic. The chain crosses the membrane as a helical span at residues 142–162 (FLLVIVDLVLMALVVAAASSA). Residues 163–194 (AAVVYLAHNGSQDANWNAICQQFTDFCQGSSL) are Extracellular-facing. Asn-171 is a glycosylation site (N-linked (GlcNAc...) asparagine). A helical transmembrane segment spans residues 195 to 215 (AVVASFVASVFLACLVVVSSV). The Cytoplasmic portion of the chain corresponds to 216–220 (ALKRT).

This sequence belongs to the Casparian strip membrane proteins (CASP) family. As to quaternary structure, homodimer and heterodimers.

It localises to the cell membrane. Functionally, regulates membrane-cell wall junctions and localized cell wall deposition. Required for establishment of the Casparian strip membrane domain (CSD) and the subsequent formation of Casparian strips, a cell wall modification of the root endodermis that determines an apoplastic barrier between the intraorganismal apoplasm and the extraorganismal apoplasm and prevents lateral diffusion. The chain is Casparian strip membrane protein 4 from Medicago truncatula (Barrel medic).